The chain runs to 443 residues: Trigger factor (443 aa).

The PPIase FKBP-type domain occupies 163-248 (GDTAVIDFEG…INEIKAKELP (86 aa)).

The protein belongs to the FKBP-type PPIase family. Tig subfamily.

Its subcellular location is the cytoplasm. It carries out the reaction [protein]-peptidylproline (omega=180) = [protein]-peptidylproline (omega=0). Its function is as follows. Involved in protein export. Acts as a chaperone by maintaining the newly synthesized protein in an open conformation. Functions as a peptidyl-prolyl cis-trans isomerase. The chain is Trigger factor from Agathobacter rectalis (strain ATCC 33656 / DSM 3377 / JCM 17463 / KCTC 5835 / VPI 0990) (Eubacterium rectale).